Reading from the N-terminus, the 319-residue chain is Lambda-crystallin homolog (319 aa).

Alanine 2 is subject to N-acetylalanine. Position 3 is a phosphoserine (serine 3). NAD(+) contacts are provided by residues 16–17 (LI), aspartate 36, glutamate 97, and lysine 102.

The protein belongs to the 3-hydroxyacyl-CoA dehydrogenase family. Homodimer.

The protein resides in the cytoplasm. The enzyme catalyses L-gulonate + NAD(+) = 3-dehydro-L-gulonate + NADH + H(+). Inhibited by malonate. Functionally, has high L-gulonate 3-dehydrogenase activity. It also exhibits low dehydrogenase activity toward L-3-hydroxybutyrate (HBA) and L-threonate. The protein is Lambda-crystallin homolog (Cryl1) of Rattus norvegicus (Rat).